A 312-amino-acid polypeptide reads, in one-letter code: Homeobox-leucine zipper protein ATHB-5 (312 aa).

The disordered stretch occupies residues 1–33; it reads MKRSRGSSDSLSGFLPIRHSTTDKQISPRPTTT. Residues 23-33 are compositionally biased toward polar residues; the sequence is DKQISPRPTTT. The segment at residues 69–128 is a DNA-binding region (homeobox); the sequence is AAEKKRRLGVEQVKALEKNFEIDNKLEPERKVKLAQELGLQPRQVAIWFQNRRARWKTKQ. Positions 129 to 164 are leucine-zipper; sequence LERDYGVLKSNFDALKRNRDSLQRDNDSLLGQIKEL.

Belongs to the HD-ZIP homeobox family. Class I subfamily. As to quaternary structure, interacts with DNA as homodimer. Widely expressed.

It localises to the nucleus. Its function is as follows. Probable transcription factor that acts as a positive regulator of ABA-responsiveness, mediating the inhibitory effect of ABA on growth during seedling establishment. Binds to the DNA sequence 5'-CAATNATTG-3'. This Arabidopsis thaliana (Mouse-ear cress) protein is Homeobox-leucine zipper protein ATHB-5 (ATHB-5).